A 133-amino-acid polypeptide reads, in one-letter code: Transcription antitermination protein NusB (133 aa).

The protein belongs to the NusB family.

In terms of biological role, involved in transcription antitermination. Required for transcription of ribosomal RNA (rRNA) genes. Binds specifically to the boxA antiterminator sequence of the ribosomal RNA (rrn) operons. In Clostridium novyi (strain NT), this protein is Transcription antitermination protein NusB.